The chain runs to 393 residues: DNA/RNA-binding protein KIN17 (393 aa).

A C2H2-type zinc finger spans residues 28–50 (CQMCQKQCRDENGFKCHCMSESH). A winged helix-turn-helix (wHTH) region spans residues 51 to 160 (QRQLLLASEN…RQLELEKKKK (110 aa)). Residue Lys-135 is modified to N6,N6,N6-trimethyllysine; by METTL22; in vitro. Lys-135 is modified (N6-methyllysine). A coiled-coil region spans residues 147–180 (ETIRRQLELEKKKKQDLDDEEKTAKFIEEQVRRG). The span at 209–224 (KGACSSSGATSSKSST) shows a compositional bias: low complexity. The disordered stretch occupies residues 209 to 260 (KGACSSSGATSSKSSTLGPSALKTIGSSASVKRKESSQSSTQSKEKKKKKSA). The stretch at 250–277 (QSKEKKKKKSALDEIMEIEEEKKRTART) forms a coiled coil. The C-terminal subdomain A stretch occupies residues 284–334 (EIIVKIITKKLGEKYHKKKAIVKEVIDKYTAVVKMIDSGDKLKLDQTHLET). The segment at 340–391 (GKRILVLNGGYRGNEGTLESINEKTFSATIVIETGPLKGRRVEGIQYEDISK) is C-terminal subdomain B.

This sequence belongs to the KIN17 family. As to quaternary structure, associated with DNA polymerase alpha, RFC1 and cyclin A, in multiprotein DNA replication complexes. Also associates with replication origins at the G1/S phase boundary and throughout the S phase in vivo. In terms of assembly, (Microbial infection) Interacts with SV40 large T antigen. Ubiquitously expressed in all tissues examined, with highest levels in skeletal muscle, heart and testis. Differentially expressed in non-tumorigenic and tumorigenic cell lines. Highly expressed in proliferating epithelial keratinocyte cells in vitro (at protein level).

Its subcellular location is the nucleus. It is found in the cytoplasm. Functionally, involved in DNA replication and the cellular response to DNA damage. May participate in DNA replication factories and create a bridge between DNA replication and repair mediated by high molecular weight complexes. May play a role in illegitimate recombination and regulation of gene expression. May participate in mRNA processing. Binds, in vitro, to double-stranded DNA. Also shown to bind preferentially to curved DNA in vitro and in vivo. Binds via its C-terminal domain to RNA in vitro. This is DNA/RNA-binding protein KIN17 from Homo sapiens (Human).